The following is a 105-amino-acid chain: Large ribosomal subunit protein bL21 (105 aa).

It belongs to the bacterial ribosomal protein bL21 family. Part of the 50S ribosomal subunit. Contacts protein L20.

Its function is as follows. This protein binds to 23S rRNA in the presence of protein L20. In Frankia casuarinae (strain DSM 45818 / CECT 9043 / HFP020203 / CcI3), this protein is Large ribosomal subunit protein bL21.